The following is a 36-amino-acid chain: Photosystem I reaction center subunit VIII (36 aa).

Residues 8–28 (SFFVPLVCLVFPAIAMAFLFV) form a helical membrane-spanning segment.

Belongs to the PsaI family.

The protein resides in the plastid. It localises to the chloroplast thylakoid membrane. Its function is as follows. May help in the organization of the PsaL subunit. This is Photosystem I reaction center subunit VIII from Chara vulgaris (Common stonewort).